We begin with the raw amino-acid sequence, 446 residues long: Phosphoglucosamine mutase (446 aa).

The active-site Phosphoserine intermediate is Ser99. The Mg(2+) site is built by Ser99, Asp242, Asp244, and Asp246. At Ser99 the chain carries Phosphoserine.

It belongs to the phosphohexose mutase family. The cofactor is Mg(2+). In terms of processing, activated by phosphorylation.

It catalyses the reaction alpha-D-glucosamine 1-phosphate = D-glucosamine 6-phosphate. Catalyzes the conversion of glucosamine-6-phosphate to glucosamine-1-phosphate. The protein is Phosphoglucosamine mutase of Campylobacter fetus subsp. fetus (strain 82-40).